The sequence spans 213 residues: Holliday junction resolvase RecU (213 aa).

Residues T99, D101, E114, and Q133 each contribute to the Mg(2+) site.

It belongs to the RecU family. The cofactor is Mg(2+).

The protein localises to the cytoplasm. It carries out the reaction Endonucleolytic cleavage at a junction such as a reciprocal single-stranded crossover between two homologous DNA duplexes (Holliday junction).. Endonuclease that resolves Holliday junction intermediates in genetic recombination. Cleaves mobile four-strand junctions by introducing symmetrical nicks in paired strands. Promotes annealing of linear ssDNA with homologous dsDNA. Required for DNA repair, homologous recombination and chromosome segregation. The sequence is that of Holliday junction resolvase RecU from Lactococcus lactis subsp. cremoris (strain SK11).